The following is a 163-amino-acid chain: E3 ubiquitin-protein ligase ATL23 (163 aa).

Residues 35 to 55 (ALLLPCVGMCIVFLIYLFLLW) form a helical membrane-spanning segment. An RING-type; atypical zinc finger spans residues 104–146 (CAVCLEDIESGQSTRLVPGCNHGFHQLCADTWLSNHTVCPVCR).

This sequence belongs to the RING-type zinc finger family. ATL subfamily.

The protein resides in the membrane. It carries out the reaction S-ubiquitinyl-[E2 ubiquitin-conjugating enzyme]-L-cysteine + [acceptor protein]-L-lysine = [E2 ubiquitin-conjugating enzyme]-L-cysteine + N(6)-ubiquitinyl-[acceptor protein]-L-lysine.. Its pathway is protein modification; protein ubiquitination. Functionally, E3 ubiquitin-protein ligase able to catalyze polyubiquitination with ubiquitin-conjugating enzyme E2 UBC8, UBC10, UBC11, UBC28 and UBC29 in vitro. In Arabidopsis thaliana (Mouse-ear cress), this protein is E3 ubiquitin-protein ligase ATL23 (ATL23).